A 689-amino-acid chain; its full sequence is Glycine--tRNA ligase beta subunit (689 aa).

It belongs to the class-II aminoacyl-tRNA synthetase family. In terms of assembly, tetramer of two alpha and two beta subunits.

Its subcellular location is the cytoplasm. The enzyme catalyses tRNA(Gly) + glycine + ATP = glycyl-tRNA(Gly) + AMP + diphosphate. This is Glycine--tRNA ligase beta subunit from Shigella flexneri serotype 5b (strain 8401).